The following is an 89-amino-acid chain: Putative membrane protein insertion efficiency factor (89 aa).

The disordered stretch occupies residues 69 to 89; the sequence is DPVPPAHTERGGTMCPSRLPE.

It belongs to the UPF0161 family.

It is found in the cell inner membrane. Could be involved in insertion of integral membrane proteins into the membrane. The protein is Putative membrane protein insertion efficiency factor of Paramagnetospirillum magneticum (strain ATCC 700264 / AMB-1) (Magnetospirillum magneticum).